We begin with the raw amino-acid sequence, 347 residues long: NADH-ubiquinone oxidoreductase chain 2 (347 aa).

The next 11 membrane-spanning stretches (helical) occupy residues 3–23 (PIIF…VMIS), 25–45 (HWLL…PIMM), 67–87 (SMLL…WTVM), 96–116 (MLMT…FWVP), 122–142 (IPLS…MSVL), 145–165 (IFPS…ILIG), 178–198 (IMAY…PYNP), 200–220 (MTLL…TMFM), 239–259 (IMTV…PLSG), 274–294 (NSII…YFYM), and 325–345 (FLPT…MLSV).

The protein belongs to the complex I subunit 2 family. As to quaternary structure, core subunit of respiratory chain NADH dehydrogenase (Complex I) which is composed of 45 different subunits. Interacts with TMEM242.

Its subcellular location is the mitochondrion inner membrane. It carries out the reaction a ubiquinone + NADH + 5 H(+)(in) = a ubiquinol + NAD(+) + 4 H(+)(out). Core subunit of the mitochondrial membrane respiratory chain NADH dehydrogenase (Complex I) which catalyzes electron transfer from NADH through the respiratory chain, using ubiquinone as an electron acceptor. Essential for the catalytic activity and assembly of complex I. The polypeptide is NADH-ubiquinone oxidoreductase chain 2 (Bos indicus (Zebu)).